A 313-amino-acid polypeptide reads, in one-letter code: LOB domain-containing protein 36 (313 aa).

Residues S6 to L107 enclose the LOB domain. The disordered stretch occupies residues G245–G313. Polar residues predominate over residues D249–D260. Low complexity predominate over residues P280 to S302.

This sequence belongs to the LOB domain-containing protein family. In terms of tissue distribution, expressed in trichomes, at the base of many lateral organs, including branching points of the inflorescence and floral organs and in the distal part of the pistil at stages when style and stigma start to develop. Also detected in pedicels and at the base of petals and sepals.

Its function is as follows. Controls the proximal-distal patterning in petals and the adaxial-abaxial determination of leaves. Involved in the repression of the homeobox gene BP. This Arabidopsis thaliana (Mouse-ear cress) protein is LOB domain-containing protein 36 (LBD36).